The chain runs to 180 residues: Pro-glucagon (180 aa).

The signal sequence occupies residues 1–20 (MKTIYFVAGLLIMLVQGSWQ). The tract at residues 25-58 (DTEENPRSFPASQTEAHEDPDEMNEDKRHSQGTF) is disordered. At Ser54 the chain carries Phosphoserine. Residues 84-89 (NRNNIA) constitute a propeptide that is removed on maturation. Phosphoserine occurs at positions 105 and 108. Position 127 is an arginine amide (Arg127). The propeptide occupies 131–145 (DFPEEVAIAEELGRR). Phosphoserine is present on residues Ser150 and Ser152.

Belongs to the glucagon family. Post-translationally, proglucagon is post-translationally processed in a tissue-specific manner in pancreatic A cells and intestinal L cells. In pancreatic A cells, the major bioactive hormone is glucagon cleaved by PCSK2/PC2. In the intestinal L cells PCSK1/PC1 liberates GLP-1, GLP-2, glicentin and oxyntomodulin. GLP-1 is further N-terminally truncated by post-translational processing in the intestinal L cells resulting in GLP-1(7-37) GLP-1-(7-36)amide. The C-terminal amidation is neither important for the metabolism of GLP-1 nor for its effects on the endocrine pancreas. As to expression, secreted in the A cells of the islets of Langerhans. Secreted in the A cells of the islets of Langerhans. Secreted from enteroendocrine L cells throughout the gastrointestinal tract. Also secreted in selected neurons in the brain. In terms of tissue distribution, secreted from enteroendocrine cells throughout the gastrointestinal tract. Also secreted in selected neurons in the brain. As to expression, secreted from enteroendocrine cells throughout the gastrointestinal tract.

It localises to the secreted. In terms of biological role, plays a key role in glucose metabolism and homeostasis. Regulates blood glucose by increasing gluconeogenesis and decreasing glycolysis. A counterregulatory hormone of insulin, raises plasma glucose levels in response to insulin-induced hypoglycemia. Plays an important role in initiating and maintaining hyperglycemic conditions in diabetes. Functionally, potent stimulator of glucose-dependent insulin release. Also stimulates insulin release in response to IL6. Plays important roles on gastric motility and the suppression of plasma glucagon levels. May be involved in the suppression of satiety and stimulation of glucose disposal in peripheral tissues, independent of the actions of insulin. Has growth-promoting activities on intestinal epithelium. May also regulate the hypothalamic pituitary axis (HPA) via effects on LH, TSH, CRH, oxytocin, and vasopressin secretion. Increases islet mass through stimulation of islet neogenesis and pancreatic beta cell proliferation. Inhibits beta cell apoptosis. Its function is as follows. Stimulates intestinal growth and up-regulates villus height in the small intestine, concomitant with increased crypt cell proliferation and decreased enterocyte apoptosis. The gastrointestinal tract, from the stomach to the colon is the principal target for GLP-2 action. Plays a key role in nutrient homeostasis, enhancing nutrient assimilation through enhanced gastrointestinal function, as well as increasing nutrient disposal. Stimulates intestinal glucose transport and decreases mucosal permeability. Significantly reduces food intake. Inhibits gastric emptying in humans. Suppression of gastric emptying may lead to increased gastric distension, which may contribute to satiety by causing a sensation of fullness. In terms of biological role, may modulate gastric acid secretion and the gastro-pyloro-duodenal activity. May play an important role in intestinal mucosal growth in the early period of life. In Mus musculus (Mouse), this protein is Pro-glucagon (Gcg).